The primary structure comprises 485 residues: Fumarate hydratase, mitochondrial (485 aa).

The N-terminal 19 residues, 1-19 (MLSASRKLNNQQFLKTIRN), are a transit peptide targeting the mitochondrion. Residues 118–120 (SGT), 150–153 (HPND), 160–162 (SSN), and T208 each bind substrate. H209 functions as the Proton donor/acceptor in the catalytic mechanism. Residue S339 is part of the active site. Substrate-binding positions include S340 and 345-347 (KVN).

The protein belongs to the class-II fumarase/aspartase family. Fumarase subfamily. In terms of assembly, homotetramer.

The protein resides in the mitochondrion. The protein localises to the cytoplasm. It carries out the reaction (S)-malate = fumarate + H2O. Its pathway is carbohydrate metabolism; tricarboxylic acid cycle; (S)-malate from fumarate: step 1/1. In terms of biological role, catalyzes the reversible stereospecific interconversion of fumarate to L-malate. Functionally, catalyzes the hydration of fumarate to L-malate in the tricarboxylic acid (TCA) cycle to facilitate a transition step in the production of energy in the form of NADH. The sequence is that of Fumarate hydratase, mitochondrial from Dictyostelium discoideum (Social amoeba).